The following is a 420-amino-acid chain: Bile acid-CoA:amino acid N-acyltransferase (420 aa).

An N6-succinyllysine modification is found at K40. S125 carries the phosphoserine modification. Residues C235 and D328 each act as charge relay system in the active site. K346 and K350 each carry N6-succinyllysine. The active-site Charge relay system is H362. N6-succinyllysine is present on K409. Residue S418 is modified to Phosphoserine.

The protein belongs to the C/M/P thioester hydrolase family. Monomer. As to expression, highly expressed in liver, kidney, gallbladder, proximal intestine and distal intestine. Weakly expressed in adrenal gland, lung, brain and muscle.

The protein resides in the cytoplasm. It localises to the cytosol. Its subcellular location is the peroxisome. The catalysed reaction is choloyl-CoA + glycine = glycocholate + CoA + H(+). The enzyme catalyses hexadecanoyl-CoA + H2O = hexadecanoate + CoA + H(+). It carries out the reaction choloyl-CoA + H2O = cholate + CoA + H(+). It catalyses the reaction chenodeoxycholoyl-CoA + H2O = chenodeoxycholate + CoA + H(+). The catalysed reaction is eicosanoyl-CoA + H2O = eicosanoate + CoA + H(+). The enzyme catalyses octadecanoyl-CoA + H2O = octadecanoate + CoA + H(+). It carries out the reaction docosanoyl-CoA + H2O = docosanoate + CoA + H(+). It catalyses the reaction tetracosanoyl-CoA + H2O = tetracosanoate + CoA + H(+). The catalysed reaction is hexacosanoyl-CoA + H2O = hexacosanoate + CoA + H(+). The enzyme catalyses dodecanoyl-CoA + H2O = dodecanoate + CoA + H(+). It carries out the reaction tetradecanoyl-CoA + H2O = tetradecanoate + CoA + H(+). It catalyses the reaction choloyl-CoA + taurine = taurocholate + CoA + H(+). The catalysed reaction is chenodeoxycholoyl-CoA + glycine = glycochenodeoxycholate + CoA + H(+). The enzyme catalyses chenodeoxycholoyl-CoA + taurine = taurochenodeoxycholate + CoA + H(+). It carries out the reaction eicosanoyl-CoA + glycine = N-eicosanoylglycinate + CoA + H(+). It catalyses the reaction hexacosanoyl-CoA + glycine = N-hexacosanoylglycine + CoA + H(+). The catalysed reaction is docosanoyl-CoA + glycine = N-docosanoylglycine + CoA + H(+). Its function is as follows. Catalyzes the amidation of bile acids (BAs) with the amino acid taurine. Selective for taurine conjugation of cholyl CoA and only taurine-conjugated BAs are found in bile. Amidation of BAs in the liver with taurine prior to their excretion into bile is an important biochemical event in bile acid metabolism. This conjugation (or amidation) plays several important biological roles in that it promotes the secretion of BAs and cholesterol into bile and increases the detergent properties of BAs in the intestine, which facilitates lipid and vitamin absorption. May also act as an acyl-CoA thioesterase that regulates intracellular levels of free fatty acids. In vitro, catalyzes the hydrolysis of long- and very long-chain saturated acyl-CoAs to the free fatty acid and coenzyme A (CoASH), and conjugates glycine to these acyl-CoAs. The polypeptide is Bile acid-CoA:amino acid N-acyltransferase (Baat) (Mus musculus (Mouse)).